Consider the following 99-residue polypeptide: Small ribosomal subunit protein uS14c (99 aa).

The segment at 46-66 (LQSSPRNSAPTRLHRRCSSTG) is disordered.

Belongs to the universal ribosomal protein uS14 family. As to quaternary structure, part of the 30S ribosomal subunit.

The protein localises to the plastid. Its subcellular location is the chloroplast. Functionally, binds 16S rRNA, required for the assembly of 30S particles. This chain is Small ribosomal subunit protein uS14c, found in Pinus thunbergii (Japanese black pine).